The chain runs to 303 residues: Aquaporin NIP1-2 (303 aa).

Residues 1-39 are disordered; sequence MAGREDGAAAGAMEEGQDSKEVKCESSEDGSSSSSSSRC. The segment covering 17-26 has biased composition (basic and acidic residues); it reads QDSKEVKCES. The next 2 helical transmembrane spans lie at 66–86 and 91–111; these read ILAEILGTYFMIFAGCGAVVV and GGAVTFPGICAVWGLVVMVLV. Positions 123–125 match the NPA 1 motif; it reads NPA. 3 helical membrane-spanning segments follow: residues 145–165, 188–208, and 212–232; these read VVAQVLGSTMASLTLRVVFGG, AAALEFVISFFLMFVVSGVAT, and AIGELAGLAVGATVAVNVLFA. The NPA 2 motif lies at 241–243; sequence NPA. The chain crosses the membrane as a helical span at residues 255-275; the sequence is YGGVWVYVAAPVSGTVCGAWA.

It belongs to the MIP/aquaporin (TC 1.A.8) family. NIP (TC 1.A.8.12) subfamily. In terms of tissue distribution, expressed in roots and leaves, and at lower levels in anthers.

Its subcellular location is the membrane. Aquaporins facilitate the transport of water and small neutral solutes across cell membranes. This chain is Aquaporin NIP1-2 (NIP1-2), found in Oryza sativa subsp. japonica (Rice).